We begin with the raw amino-acid sequence, 344 residues long: Krueppel-like factor 3 (344 aa).

A repressor domain region spans residues 1–74 (MLMFDPVPVK…TVNKRGSPPA (74 aa)). K10 is covalently cross-linked (Glycyl lysine isopeptide (Lys-Gly) (interchain with G-Cter in SUMO)). The short motif at 60–68 (EPVDLTVNK) is the 9aaTAD; inactive element. The CTBP-binding motif signature appears at 61 to 65 (PVDLT). The segment at 66-111 (VNKRGSPPAAGGSPSSLKFPSHRRASPGLSMPSSSPPIKKYSPPSP) is disordered. A Glycyl lysine isopeptide (Lys-Gly) (interchain with G-Cter in SUMO2) cross-link involves residue K68. Low complexity-rich tracts occupy residues 70–81 (GSPPAAGGSPSS) and 91–107 (SPGL…KKYS). A phosphoserine mark is found at S71, S91, S100, S107, and S110. A Glycyl lysine isopeptide (Lys-Gly) (interchain with G-Cter in SUMO2) cross-link involves residue K195. K197 participates in a covalent cross-link: Glycyl lysine isopeptide (Lys-Gly) (interchain with G-Cter in SUMO); alternate. K197 participates in a covalent cross-link: Glycyl lysine isopeptide (Lys-Gly) (interchain with G-Cter in SUMO2); alternate. A phosphoserine mark is found at S215, S223, and S249. The interval 235-254 (SVIVQPGKRPLPVESPDTQR) is disordered. 3 consecutive C2H2-type zinc fingers follow at residues 259–283 (HRCD…RRTH), 289–313 (YKCT…FRKH), and 319–341 (FQCP…RKRH).

Belongs to the krueppel C2H2-type zinc-finger protein family. As to quaternary structure, monomer. Sumoylated with SUMO1. Sumoylation is enhanced by PIAS1, PIAS2alpha and PIAS2beta, and PIAS4, but not by Pc2. Enhances transcriptional repression, but has no effect on DNA binding. Sumoylation on Lys-197 is the major site. In 8.5 day embryos, expressed in midbrain, anterior hindbrain and ventral forebrain. In 9 day embryos, expressed throughout ventral anterior half of embryo including midbrain-hindbrain junction, ventral midbrain, diencephalon and forebrain. At 10.5 days, distribution is more widespread with expression also found in developing limb buds. Widely expressed in the adult.

The protein resides in the nucleus. Its function is as follows. Binds to the CACCC box of erythroid cell-expressed genes. May play a role in hematopoiesis. The polypeptide is Krueppel-like factor 3 (Klf3) (Mus musculus (Mouse)).